Here is a 372-residue protein sequence, read N- to C-terminus: 4-hydroxy-3-methylbut-2-en-1-yl diphosphate synthase (flavodoxin) (372 aa).

[4Fe-4S] cluster is bound by residues Cys-270, Cys-273, Cys-305, and Glu-312.

It belongs to the IspG family. It depends on [4Fe-4S] cluster as a cofactor.

It carries out the reaction (2E)-4-hydroxy-3-methylbut-2-enyl diphosphate + oxidized [flavodoxin] + H2O + 2 H(+) = 2-C-methyl-D-erythritol 2,4-cyclic diphosphate + reduced [flavodoxin]. It functions in the pathway isoprenoid biosynthesis; isopentenyl diphosphate biosynthesis via DXP pathway; isopentenyl diphosphate from 1-deoxy-D-xylulose 5-phosphate: step 5/6. Converts 2C-methyl-D-erythritol 2,4-cyclodiphosphate (ME-2,4cPP) into 1-hydroxy-2-methyl-2-(E)-butenyl 4-diphosphate. In Idiomarina loihiensis (strain ATCC BAA-735 / DSM 15497 / L2-TR), this protein is 4-hydroxy-3-methylbut-2-en-1-yl diphosphate synthase (flavodoxin).